The following is a 428-amino-acid chain: Phosphomethylpyrimidine synthase 1 (428 aa).

Residues methionine 94, tyrosine 123, histidine 162, 184–186, 225–228, and glutamate 264 contribute to the substrate site; these read SRG and NGMR. Histidine 268 lines the Zn(2+) pocket. Tyrosine 291 provides a ligand contact to substrate. Histidine 332 is a binding site for Zn(2+). [4Fe-4S] cluster contacts are provided by cysteine 408, cysteine 411, and cysteine 415.

This sequence belongs to the ThiC family. Requires [4Fe-4S] cluster as cofactor.

It catalyses the reaction 5-amino-1-(5-phospho-beta-D-ribosyl)imidazole + S-adenosyl-L-methionine = 4-amino-2-methyl-5-(phosphooxymethyl)pyrimidine + CO + 5'-deoxyadenosine + formate + L-methionine + 3 H(+). Its pathway is cofactor biosynthesis; thiamine diphosphate biosynthesis. Functionally, catalyzes the synthesis of the hydroxymethylpyrimidine phosphate (HMP-P) moiety of thiamine from aminoimidazole ribotide (AIR) in a radical S-adenosyl-L-methionine (SAM)-dependent reaction. The polypeptide is Phosphomethylpyrimidine synthase 1 (Methanosarcina barkeri (strain Fusaro / DSM 804)).